The sequence spans 515 residues: 2,3-bisphosphoglycerate-independent phosphoglycerate mutase (515 aa).

2 residues coordinate Mn(2+): D17 and S67. Residue S67 is the Phosphoserine intermediate of the active site. Substrate contacts are provided by residues H128, 157-158 (RD), R190, R196, 262-265 (RADR), and K336. Residues D403, H407, D444, H445, and H463 each contribute to the Mn(2+) site.

Belongs to the BPG-independent phosphoglycerate mutase family. Monomer. Mn(2+) serves as cofactor.

It carries out the reaction (2R)-2-phosphoglycerate = (2R)-3-phosphoglycerate. It functions in the pathway carbohydrate degradation; glycolysis; pyruvate from D-glyceraldehyde 3-phosphate: step 3/5. In terms of biological role, catalyzes the interconversion of 2-phosphoglycerate and 3-phosphoglycerate. This is 2,3-bisphosphoglycerate-independent phosphoglycerate mutase from Acinetobacter baylyi (strain ATCC 33305 / BD413 / ADP1).